The sequence spans 348 residues: Protein RecA (348 aa).

Glycine 66 to threonine 73 lines the ATP pocket.

The protein belongs to the RecA family.

The protein resides in the cytoplasm. Can catalyze the hydrolysis of ATP in the presence of single-stranded DNA, the ATP-dependent uptake of single-stranded DNA by duplex DNA, and the ATP-dependent hybridization of homologous single-stranded DNAs. It interacts with LexA causing its activation and leading to its autocatalytic cleavage. This is Protein RecA from Legionella pneumophila (strain Paris).